The chain runs to 109 residues: Ribulose bisphosphate carboxylase small subunit (109 aa).

The protein belongs to the RuBisCO small chain family. In terms of assembly, heterohexadecamer of 8 large and 8 small subunits. Forms complexes of many stoichiometries with Raf1 and RbcL.

It is found in the carboxysome. Its function is as follows. RuBisCO catalyzes two reactions: the carboxylation of D-ribulose 1,5-bisphosphate, the primary event in carbon dioxide fixation, as well as the oxidative fragmentation of the pentose substrate in the photorespiration process. Both reactions occur simultaneously and in competition at the same active site. Although the small subunit is not catalytic it is essential for maximal activity. The polypeptide is Ribulose bisphosphate carboxylase small subunit (Nostoc sp. (strain PCC 7120 / SAG 25.82 / UTEX 2576)).